A 233-amino-acid chain; its full sequence is Uridylate kinase (233 aa).

ATP-binding positions include 9–12 (KLSG), glycine 51, and arginine 55. UMP contacts are provided by residues aspartate 69 and 130–137 (TGNPFFST). ATP is bound by residues asparagine 158, tyrosine 164, and aspartate 167.

The protein belongs to the UMP kinase family. In terms of assembly, homohexamer.

Its subcellular location is the cytoplasm. It carries out the reaction UMP + ATP = UDP + ADP. It functions in the pathway pyrimidine metabolism; CTP biosynthesis via de novo pathway; UDP from UMP (UMPK route): step 1/1. Inhibited by UTP. Its function is as follows. Catalyzes the reversible phosphorylation of UMP to UDP. The chain is Uridylate kinase from Thermus thermophilus (strain ATCC BAA-163 / DSM 7039 / HB27).